A 172-amino-acid chain; its full sequence is Large ribosomal subunit protein uL10 (172 aa).

It belongs to the universal ribosomal protein uL10 family. As to quaternary structure, part of the ribosomal stalk of the 50S ribosomal subunit. The N-terminus interacts with L11 and the large rRNA to form the base of the stalk. The C-terminus forms an elongated spine to which L12 dimers bind in a sequential fashion forming a multimeric L10(L12)X complex.

Its function is as follows. Forms part of the ribosomal stalk, playing a central role in the interaction of the ribosome with GTP-bound translation factors. The protein is Large ribosomal subunit protein uL10 of Rhodospirillum rubrum (strain ATCC 11170 / ATH 1.1.1 / DSM 467 / LMG 4362 / NCIMB 8255 / S1).